The primary structure comprises 138 residues: ATP synthase epsilon chain (138 aa).

Residues 89 to 114 are compositionally biased toward basic and acidic residues; sequence KDTAQQEWNEAQKRLDEASKSGDRQK. The segment at 89–117 is disordered; the sequence is KDTAQQEWNEAQKRLDEASKSGDRQKQIQ.

The protein belongs to the ATPase epsilon chain family. In terms of assembly, F-type ATPases have 2 components, CF(1) - the catalytic core - and CF(0) - the membrane proton channel. CF(1) has five subunits: alpha(3), beta(3), gamma(1), delta(1), epsilon(1). CF(0) has three main subunits: a, b and c.

It is found in the cellular thylakoid membrane. Produces ATP from ADP in the presence of a proton gradient across the membrane. The sequence is that of ATP synthase epsilon chain from Gloeothece citriformis (strain PCC 7424) (Cyanothece sp. (strain PCC 7424)).